The primary structure comprises 470 residues: MVDQVKVVADDQAPAEQSLRRNLTNRHIQLIAIGGAIGTGLFMGSGKTISLAGPSIIFVYMIIGFMLFFVMRAMGELLLSNLEYKSFSDFASDLLGPWAGYFTGWTYWFCWVVTGMADVVAITAYAQFWFPGLSDWVASLSVIILLLVLNLATVKMFGEMEFWFAMIKIVAIVSLIVVGLVMVAMHFQSPTGVEASFAHLWNDGGWFPKGLSGFFAGFQIAVFAFVGIELVGTTAAETKDPEKSLPRAINSIPIRIIMFYVFSLIVIMSVTPWSSVVPEKSPFVELFVLVGLPAAASVINFVVLTSAASSANSGVFSTSRMLFGLAQEGVAPKAFAKLSKRAVPAKGLTFSCICLLGGVVMLYVNPSVIGAFTMITTVSAILFMFVWTIILCSYLVYRKQRPHLHEKSIYKMPLGKLMCWVCMAFFVFVLVLLTLEDDTRQALLVTPLWFIALGLGWLFIGKKRAAELRK.

Transmembrane regions (helical) follow at residues leucine 30 to serine 50, leucine 51 to methionine 71, phenylalanine 102 to isoleucine 122, phenylalanine 128 to valine 148, phenylalanine 162 to methionine 182, leucine 211 to valine 231, isoleucine 256 to valine 276, phenylalanine 283 to valine 303, phenylalanine 350 to glycine 370, alanine 371 to leucine 391, proline 413 to leucine 433, and glutamine 441 to glycine 461.

This sequence belongs to the amino acid-polyamine-organocation (APC) superfamily. Amino acid transporter (AAT) (TC 2.A.3.1) family.

The protein localises to the cell inner membrane. It catalyses the reaction D-alanine(in) + H(+)(in) = D-alanine(out) + H(+)(out). The enzyme catalyses D-serine(out) + H(+)(out) = D-serine(in) + H(+)(in). The catalysed reaction is glycine(in) + H(+)(in) = glycine(out) + H(+)(out). It carries out the reaction D-cycloserine(in) + H(+)(in) = D-cycloserine(out) + H(+)(out). With respect to regulation, uptake of D-serine is inhibited by D-alanine, D-cycloserine, glycine and at high concentrations of D-threonine. Functionally, permease that is involved in the transport across the cytoplasmic membrane of D-alanine, D-serine and glycine. Is the only transporter of D-alanine. Transports D-serine less efficiently than DsdX. In addition, in minimal media, transports the broad spectrum antibiotic D-cycloserine into the cell. Transports D-cycloserine only in minimal media, and not in a complex medium, suggesting that CycA does not play a role in D-cycloserine transport when E.coli is grown in a complex or biologically relevant medium, probably due to competition from other CycA substrates present in the medium. The sequence is that of D-serine/D-alanine/glycine transporter (cycA) from Escherichia coli O6:H1 (strain CFT073 / ATCC 700928 / UPEC).